A 254-amino-acid chain; its full sequence is 3-deoxy-manno-octulosonate cytidylyltransferase (254 aa).

Belongs to the KdsB family.

The protein resides in the cytoplasm. It catalyses the reaction 3-deoxy-alpha-D-manno-oct-2-ulosonate + CTP = CMP-3-deoxy-beta-D-manno-octulosonate + diphosphate. Its pathway is nucleotide-sugar biosynthesis; CMP-3-deoxy-D-manno-octulosonate biosynthesis; CMP-3-deoxy-D-manno-octulosonate from 3-deoxy-D-manno-octulosonate and CTP: step 1/1. The protein operates within bacterial outer membrane biogenesis; lipopolysaccharide biosynthesis. Activates KDO (a required 8-carbon sugar) for incorporation into bacterial lipopolysaccharide in Gram-negative bacteria. In Chlamydia trachomatis serovar L2 (strain ATCC VR-902B / DSM 19102 / 434/Bu), this protein is 3-deoxy-manno-octulosonate cytidylyltransferase.